A 281-amino-acid polypeptide reads, in one-letter code: 3-hydroxybutyryl-CoA dehydrogenase (281 aa).

The protein belongs to the 3-hydroxyacyl-CoA dehydrogenase family.

It carries out the reaction (3S)-3-hydroxybutanoyl-CoA + NADP(+) = acetoacetyl-CoA + NADPH + H(+). It functions in the pathway lipid metabolism; butanoate metabolism. The sequence is that of 3-hydroxybutyryl-CoA dehydrogenase (hbd) from Clostridioides difficile (Peptoclostridium difficile).